A 332-amino-acid polypeptide reads, in one-letter code: Anthranilate phosphoribosyltransferase (332 aa).

5-phospho-alpha-D-ribose 1-diphosphate is bound by residues G79, 82–83, T87, 89–92, 107–115, and S119; these read GD, NIST, and KHGNRGVSS. An anthranilate-binding site is contributed by G79. S91 is a binding site for Mg(2+). Residue N110 participates in anthranilate binding. Position 165 (R165) interacts with anthranilate. Residues D223 and E224 each coordinate Mg(2+).

Belongs to the anthranilate phosphoribosyltransferase family. As to quaternary structure, homodimer. The cofactor is Mg(2+).

The enzyme catalyses N-(5-phospho-beta-D-ribosyl)anthranilate + diphosphate = 5-phospho-alpha-D-ribose 1-diphosphate + anthranilate. Its pathway is amino-acid biosynthesis; L-tryptophan biosynthesis; L-tryptophan from chorismate: step 2/5. Catalyzes the transfer of the phosphoribosyl group of 5-phosphorylribose-1-pyrophosphate (PRPP) to anthranilate to yield N-(5'-phosphoribosyl)-anthranilate (PRA). The chain is Anthranilate phosphoribosyltransferase from Vibrio cholerae serotype O1 (strain ATCC 39541 / Classical Ogawa 395 / O395).